The primary structure comprises 195 residues: dITP/XTP pyrophosphatase (195 aa).

Residue 7 to 12 (SSNKGK) coordinates substrate. Residues glutamate 38 and aspartate 68 each coordinate Mg(2+). The active-site Proton acceptor is aspartate 68. Residues serine 69, 150–153 (FGYD), lysine 173, and 178–179 (HR) each bind substrate.

The protein belongs to the HAM1 NTPase family. In terms of assembly, homodimer. Requires Mg(2+) as cofactor.

The catalysed reaction is XTP + H2O = XMP + diphosphate + H(+). It catalyses the reaction dITP + H2O = dIMP + diphosphate + H(+). It carries out the reaction ITP + H2O = IMP + diphosphate + H(+). Functionally, pyrophosphatase that catalyzes the hydrolysis of nucleoside triphosphates to their monophosphate derivatives, with a high preference for the non-canonical purine nucleotides XTP (xanthosine triphosphate), dITP (deoxyinosine triphosphate) and ITP. Seems to function as a house-cleaning enzyme that removes non-canonical purine nucleotides from the nucleotide pool, thus preventing their incorporation into DNA/RNA and avoiding chromosomal lesions. The sequence is that of dITP/XTP pyrophosphatase from Nautilia profundicola (strain ATCC BAA-1463 / DSM 18972 / AmH).